The primary structure comprises 329 residues: Beta-ketoacyl-[acyl-carrier-protein] synthase III (329 aa).

Active-site residues include Cys-113 and His-255. The ACP-binding stretch occupies residues 256–260 (QANQR). Asn-285 is a catalytic residue.

Belongs to the thiolase-like superfamily. FabH family. In terms of assembly, homodimer.

It is found in the cytoplasm. The enzyme catalyses malonyl-[ACP] + acetyl-CoA + H(+) = 3-oxobutanoyl-[ACP] + CO2 + CoA. The protein operates within lipid metabolism; fatty acid biosynthesis. Catalyzes the condensation reaction of fatty acid synthesis by the addition to an acyl acceptor of two carbons from malonyl-ACP. Catalyzes the first condensation reaction which initiates fatty acid synthesis and may therefore play a role in governing the total rate of fatty acid production. Possesses both acetoacetyl-ACP synthase and acetyl transacylase activities. Its substrate specificity determines the biosynthesis of branched-chain and/or straight-chain of fatty acids. This is Beta-ketoacyl-[acyl-carrier-protein] synthase III from Chlorobium chlorochromatii (strain CaD3).